A 318-amino-acid chain; its full sequence is NADH-ubiquinone oxidoreductase chain 1 (318 aa).

Helical transmembrane passes span 2–22 (FTINILLLVIPILLAVAFLTL), 70–90 (MFIIAPILALTLALTMWIPLP), 100–120 (LGVLFMLAMSSLAVYSILWSG), 146–166 (LAIILLSVLLMNGSFTLSTLI), 171–191 (HLWLIFPSWPLAMMWFISTLA), 222–242 (LFFMAEYANIIMMNAFTTILF), 254–276 (LYTINFTTKTLLLTTSFLWIRAS), and 294–314 (LPLTLALCMWHVSLPITTSSI).

It belongs to the complex I subunit 1 family. Core subunit of respiratory chain NADH dehydrogenase (Complex I) which is composed of 45 different subunits.

The protein resides in the mitochondrion inner membrane. It carries out the reaction a ubiquinone + NADH + 5 H(+)(in) = a ubiquinol + NAD(+) + 4 H(+)(out). In terms of biological role, core subunit of the mitochondrial membrane respiratory chain NADH dehydrogenase (Complex I) which catalyzes electron transfer from NADH through the respiratory chain, using ubiquinone as an electron acceptor. Essential for the catalytic activity and assembly of complex I. The chain is NADH-ubiquinone oxidoreductase chain 1 (MT-ND1) from Ceratotherium simum (White rhinoceros).